The sequence spans 807 residues: ATP-binding cassette sub-family F member 1 (807 aa).

The segment at 1–227 is disordered; the sequence is MPKGPKQQPP…KEKAKKAEQM (227 aa). Residue S22 is modified to Phosphoserine. Basic residues predominate over residues 29-39; the sequence is KKGKKDKKTKK. Residues 47 to 65 are compositionally biased toward basic and acidic residues; that stretch reads VEDRQAGEEEKVLKEKEQQ. Residues 73 to 85 are compositionally biased toward basic residues; it reads QKKKRDTRKGRRK. Residue S106 is modified to Phosphoserine. Phosphoserine; by CK2 occurs at positions 110 and 141. A compositionally biased stretch (basic and acidic residues) spans 148-161; that stretch reads EKHPPKPAKPEKNR. S167 carries the post-translational modification Phosphoserine. Over residues 197–207 the composition is skewed to acidic residues; the sequence is LDDEEEQDEEE. The segment covering 208–227 has biased composition (basic and acidic residues); sequence IKEKEPPKQGKEKAKKAEQM. The ABC transporter 1 domain maps to 266 to 510; it reads IKLEKFSISA…MYQQKQKELL (245 aa). 298-305 serves as a coordination point for ATP; that stretch reads GPNGKGKT. Residues 521-542 show a composition bias toward basic and acidic residues; the sequence is KELKAGGKSTKQAEKQTKEALT. The segment at 521-564 is disordered; sequence KELKAGGKSTKQAEKQTKEALTRKQQKCRRKNQDEESQEAPELL. S557 is subject to Phosphoserine. The ABC transporter 2 domain occupies 587–802; sequence LGLHGVTFGY…VLEALGEVMV (216 aa). 620–627 is a binding site for ATP; it reads GPNGVGKS.

This sequence belongs to the ABC transporter superfamily. ABCF family. EF3 subfamily. Interacts (via N-terminus) with EIF2S1; the interaction is independent of its phosphorylated status. Associates (via both ABC transporter domains) with the ribosomes. In terms of processing, phosphorylated at phosphoserine and phosphothreonine. Phosphorylation on Ser-110 and Ser-141 by CK2; inhibits association of EIF2 with ribosomes.

It localises to the cytoplasm. Its subcellular location is the nucleus. The protein resides in the nucleoplasm. It is found in the nucleus envelope. Its function is as follows. Required for efficient Cap- and IRES-mediated mRNA translation initiation. Not involved in the ribosome biogenesis. In Sus scrofa (Pig), this protein is ATP-binding cassette sub-family F member 1 (ABCF1).